A 228-amino-acid polypeptide reads, in one-letter code: 5'-methylthioadenosine/S-adenosylhomocysteine nucleosidase (228 aa).

Residue glutamate 11 is the Proton acceptor of the active site. Substrate is bound by residues glycine 77, isoleucine 151, and 172–173; that span reads ME. Residue aspartate 196 is the Proton donor of the active site.

The protein belongs to the PNP/UDP phosphorylase family. MtnN subfamily.

The enzyme catalyses S-adenosyl-L-homocysteine + H2O = S-(5-deoxy-D-ribos-5-yl)-L-homocysteine + adenine. The catalysed reaction is S-methyl-5'-thioadenosine + H2O = 5-(methylsulfanyl)-D-ribose + adenine. It carries out the reaction 5'-deoxyadenosine + H2O = 5-deoxy-D-ribose + adenine. It functions in the pathway amino-acid biosynthesis; L-methionine biosynthesis via salvage pathway; S-methyl-5-thio-alpha-D-ribose 1-phosphate from S-methyl-5'-thioadenosine (hydrolase route): step 1/2. Functionally, catalyzes the irreversible cleavage of the glycosidic bond in both 5'-methylthioadenosine (MTA) and S-adenosylhomocysteine (SAH/AdoHcy) to adenine and the corresponding thioribose, 5'-methylthioribose and S-ribosylhomocysteine, respectively. Also cleaves 5'-deoxyadenosine, a toxic by-product of radical S-adenosylmethionine (SAM) enzymes, into 5-deoxyribose and adenine. The protein is 5'-methylthioadenosine/S-adenosylhomocysteine nucleosidase of Staphylococcus saprophyticus subsp. saprophyticus (strain ATCC 15305 / DSM 20229 / NCIMB 8711 / NCTC 7292 / S-41).